The primary structure comprises 150 residues: Large ribosomal subunit protein bL9 (150 aa).

It belongs to the bacterial ribosomal protein bL9 family.

In terms of biological role, binds to the 23S rRNA. The chain is Large ribosomal subunit protein bL9 from Streptococcus equi subsp. zooepidemicus (strain MGCS10565).